Reading from the N-terminus, the 1141-residue chain is Membrane-associated protein gex-3 (1141 aa).

The protein belongs to the HEM-1/HEM-2 family. Interacts with aco-1, gei-13 and gex-2. Interacts with gex-3. As to expression, expressed in neurons.

Its subcellular location is the cytoplasm. Rac effector required for tissue morphogenesis, cell migrations and egg laying. May play a role in egg laying and in yolk protein clatherin-mediated endocytosis by oocytes during oogenesis. Plays a role in the formation of gap junctions between EA and EP endodermal precursor cells in embryos. The chain is Membrane-associated protein gex-3 from Caenorhabditis elegans.